A 630-amino-acid polypeptide reads, in one-letter code: E3 ubiquitin-protein ligase TRIM41 (630 aa).

Residues 20-61 (CAICLDYFTDPVSIGCGHNFCRVCVTQLWGGEDEEDRDELDR) form an RING-type; degenerate zinc finger. Residues 51–75 (EDEEDRDELDREEEEEEVGEEEEVE) are compositionally biased toward acidic residues. Disordered regions lie at residues 51-97 (EDEE…GDME) and 148-176 (EDED…PPPA). Phosphothreonine is present on T85. Residues 148 to 166 (EDEDEEEEVLEEDEEEELD) show a composition bias toward acidic residues. The segment at 222 to 263 (NEQGICPRHQEALKLFCEVDEEAICVVCRESRSHKQHSVVPL) adopts a B box-type zinc-finger fold. The Zn(2+) site is built by C227, H230, C249, and H255. K256 is covalently cross-linked (Glycyl lysine isopeptide (Lys-Gly) (interchain with G-Cter in SUMO2)). Residues 281-374 (LRKHLEAVQK…AEAQERSQQG (94 aa)) are a coiled coil. In terms of domain architecture, B30.2/SPRY spans 413 to 630 (LTDAIVRKMS…SKGTRIKLCP (218 aa)). Position 447 is a phosphoserine (S447). Residues 503 to 535 (ARESTHHKEKVGSGGSSVSSGDASSSRHHHRRR) form a disordered region.

This sequence belongs to the TRIM/RBCC family. As to quaternary structure, interacts with PRKCA. Interacts with NOD2. Interacts with TRIM17; this interaction prevents TRIM41 activity on ZSCAN2. Auto-ubiquitinated.

The protein localises to the cytoplasm. Its subcellular location is the nucleus. It carries out the reaction S-ubiquitinyl-[E2 ubiquitin-conjugating enzyme]-L-cysteine + [acceptor protein]-L-lysine = [E2 ubiquitin-conjugating enzyme]-L-cysteine + N(6)-ubiquitinyl-[acceptor protein]-L-lysine.. The protein operates within protein modification; protein ubiquitination. E3 ligase that plays essential roles in innate antiviral response. Directly binds to influenza A virus or vesicular stomatitis virus nucleoproteins and targets them for ubiquitination and proteasomal degradation, thereby limiting viral infections. Activates the innate antiviral response by catalyzing monoubiquitination of CGAS, thereby activating CGAS. Also involved in innate antiviral response by mediating 'Lys-63'-linked polyubiquitylation of BCL10 which in turn hubs NEMO for activation of NF-kappa-B and IRF3 pathways. Catalyzes the ubiquitin-mediated degradation of other substrates including protein kinase C, ZSCAN21 or TOP3B suggesting additional roles besides its function in immune response. The polypeptide is E3 ubiquitin-protein ligase TRIM41 (Mus musculus (Mouse)).